A 58-amino-acid polypeptide reads, in one-letter code: Small ribosomal subunit protein bS21 (58 aa).

The protein belongs to the bacterial ribosomal protein bS21 family.

The chain is Small ribosomal subunit protein bS21 from Staphylococcus saprophyticus subsp. saprophyticus (strain ATCC 15305 / DSM 20229 / NCIMB 8711 / NCTC 7292 / S-41).